The primary structure comprises 309 residues: SUR7 family protein FMP45 (309 aa).

Residues 1–5 (MIFKR) are Cytoplasmic-facing. The chain crosses the membrane as a helical span at residues 6-26 (FVNLLVFLFLLGAGLLTFFLI). Residues 27–116 (LSGGRESGTL…YYLSRVGWAM (90 aa)) lie on the Extracellular side of the membrane. N-linked (GlcNAc...) asparagine glycosylation is present at asparagine 73. Residues 117–137 (LLISLFFIVLALVPGFLATFL) form a helical membrane-spanning segment. Topologically, residues 138–140 (PFK) are cytoplasmic. Residues 141–161 (AVPVLYCVLSWLAFFFIILAA) form a helical membrane-spanning segment. The Extracellular portion of the chain corresponds to 162–188 (CLYTGCYVKARKTFRNSGRSARLGPKN). The helical transmembrane segment at 189-209 (FAFIWTSVFLMLVNAIWSTIF) threads the bilayer. At 210–309 (SATHKAHSTY…GLAGPVTVRD (100 aa)) the chain is on the cytoplasmic side. 2 positions are modified to phosphoserine: serine 230 and serine 232. Threonine 235 is subject to Phosphothreonine. Residues 253–309 (GPITAAPVVGQPQPTTTTTPAGNGKFFQKLKTRKQVPSAELEPAGDGGLAGPVTVRD) form a disordered region. The segment covering 258–274 (APVVGQPQPTTTTTPAG) has biased composition (low complexity).

Belongs to the SUR7 family.

It is found in the cell membrane. Involved in sporulation and affects the sphingolipid composition of the plasma membrane. This Saccharomyces cerevisiae (strain ATCC 204508 / S288c) (Baker's yeast) protein is SUR7 family protein FMP45 (FMP45).